Reading from the N-terminus, the 484-residue chain is Probable protein disulfide-isomerase ER-60 (484 aa).

The first 14 residues, Met-1–Ala-14, serve as a signal peptide directing secretion. Thioredoxin domains lie at Ser-15–Gly-125 and Phe-338–Thr-467. Residues Cys-46, Cys-49, Cys-388, and Cys-391 each act as nucleophile in the active site. Intrachain disulfides connect Cys-46–Cys-49 and Cys-388–Cys-391. The Prevents secretion from ER motif lies at Lys-481 to Leu-484.

Belongs to the protein disulfide isomerase family.

The protein localises to the endoplasmic reticulum lumen. It carries out the reaction Catalyzes the rearrangement of -S-S- bonds in proteins.. The polypeptide is Probable protein disulfide-isomerase ER-60 (Schistosoma mansoni (Blood fluke)).